We begin with the raw amino-acid sequence, 838 residues long: MGRKLDLSGLSNNEAEHVLRVVQRDMQLRKKEEERLSEMKQELEEEGSRCLLLSKQQKFNEHCCIRCCSPFTFLLNPKRQCLDCHYNICKSCCSYSQSERGYICAACQKSRHLRTQSLEWFYNNVKSRFKRFGSAKVLKTLYRKHIIERGALSELPEVSAHEGSNDNGSICDGSDSTLYKQSEGHSMADTLTVALRVAEEAIEEAIAKAENYKDSLEKQNEARYLHEHKEELIEELATTIVQKIIQRGKRPEIQEEYEFVWPQNQKSELPSPTSTQNPLATQNSHSTSQPGAVAQSDISKRSRSAYSSDDSPEKGPEVGMAPGVPKSTEVETDIQNYSSLRRESRALSLPGWKSVDRLENSSASSVLQSPDGNWIALQSSQHSRPSLLTKRKSLVFSVLEKESGVVSAYDEMGSDSDPEDQGGWGAALLQFRRRLSDETYYTDSQHDPEWTFTQHPPITSPSSGQYTNTETLNSDSETSPSPSTRARRAPVMKKGPPETHLYPYYRHPADIVALPQLKPDVLDVNFNPHLGGDSSDGEERSEQVKRSRRRRKSKRETSEHSRAHNALYSAATAENSTVLLNAMMMRRQQSQENTVPLNHQTPDSVTSPDILTFNNMSPEPEYQNTLAHNSSAASLPLLSQLGSNNPGFAPQDPLLRAFPVNETLEEELKYKLSELIGQVSERDVKSSDFEPISEVGNKQEDRVSEKDSGKLRPKERRESKRESKLREMEKQSERQTVKLMDTSDAVRQINIERQMKKERERQRDIERQVERERERQRELEKQIEKDRERRREIEMQVEKKQERQKEMEKQLKQEQERQSEIERDLEKKRKSIRMEKRN.

Residues 4–124 (KLDLSGLSNN…TQSLEWFYNN (121 aa)) form the RabBD domain. Residues 58-112 (KFNEHCCIRCCSPFTFLLNPKRQCLDCHYNICKSCCSYSQSERGYICAACQKSRH) form an FYVE-type zinc finger. Residues 188-237 (ADTLTVALRVAEEAIEEAIAKAENYKDSLEKQNEARYLHEHKEELIEELA) are a coiled coil. 2 stretches are compositionally biased toward polar residues: residues 263 to 290 (QNQKSELPSPTSTQNPLATQNSHSTSQP) and 451 to 484 (TFTQHPPITSPSSGQYTNTETLNSDSETSPSPST). Disordered regions lie at residues 263–331 (QNQK…TEVE), 444–501 (SQHD…ETHL), 525–570 (NFNP…LYSA), and 681–838 (ERDV…EKRN). Basic and acidic residues-rich tracts occupy residues 697–736 (NKQEDRVSEKDSGKLRPKERRESKRESKLREMEKQSERQT) and 753–838 (RQMK…EKRN). Positions 714 to 833 (KERRESKRES…DLEKKRKSIR (120 aa)) form a coiled coil.

Interacts with prkar2aa.

Its subcellular location is the cytoplasm. The protein localises to the perinuclear region. It is found in the cytoplasmic vesicle. The protein resides in the secretory vesicle. Its function is as follows. May link secretory vesicles to actin filaments. May function as a protein kinase A-anchoring protein (AKAP). May act as a scaffolding protein that links PKA to components of the exocytosis machinery, thus facilitating exocytosis. The polypeptide is Rab effector MyRIP (myrip) (Danio rerio (Zebrafish)).